We begin with the raw amino-acid sequence, 405 residues long: Tryptophan synthase beta chain (405 aa).

Lys-98 is modified (N6-(pyridoxal phosphate)lysine).

Belongs to the TrpB family. In terms of assembly, tetramer of two alpha and two beta chains. The cofactor is pyridoxal 5'-phosphate.

The catalysed reaction is (1S,2R)-1-C-(indol-3-yl)glycerol 3-phosphate + L-serine = D-glyceraldehyde 3-phosphate + L-tryptophan + H2O. Its pathway is amino-acid biosynthesis; L-tryptophan biosynthesis; L-tryptophan from chorismate: step 5/5. In terms of biological role, the beta subunit is responsible for the synthesis of L-tryptophan from indole and L-serine. This Xanthomonas campestris pv. campestris (strain 8004) protein is Tryptophan synthase beta chain.